The chain runs to 385 residues: UDP-N-acetylglucosamine--N-acetylmuramyl-(pentapeptide) pyrophosphoryl-undecaprenol N-acetylglucosamine transferase (385 aa).

UDP-N-acetyl-alpha-D-glucosamine is bound by residues 11–13, Asn-117, Arg-160, Ser-215, and Gln-317; that span reads TGG.

This sequence belongs to the glycosyltransferase 28 family. MurG subfamily.

Its subcellular location is the cell inner membrane. The catalysed reaction is di-trans,octa-cis-undecaprenyl diphospho-N-acetyl-alpha-D-muramoyl-L-alanyl-D-glutamyl-meso-2,6-diaminopimeloyl-D-alanyl-D-alanine + UDP-N-acetyl-alpha-D-glucosamine = di-trans,octa-cis-undecaprenyl diphospho-[N-acetyl-alpha-D-glucosaminyl-(1-&gt;4)]-N-acetyl-alpha-D-muramoyl-L-alanyl-D-glutamyl-meso-2,6-diaminopimeloyl-D-alanyl-D-alanine + UDP + H(+). The protein operates within cell wall biogenesis; peptidoglycan biosynthesis. Cell wall formation. Catalyzes the transfer of a GlcNAc subunit on undecaprenyl-pyrophosphoryl-MurNAc-pentapeptide (lipid intermediate I) to form undecaprenyl-pyrophosphoryl-MurNAc-(pentapeptide)GlcNAc (lipid intermediate II). The chain is UDP-N-acetylglucosamine--N-acetylmuramyl-(pentapeptide) pyrophosphoryl-undecaprenol N-acetylglucosamine transferase from Rickettsia prowazekii (strain Madrid E).